The chain runs to 20 residues: Antifungal protein (20 aa).

Belongs to the protease inhibitor I3 (leguminous Kunitz-type inhibitor) family.

Its function is as follows. Inhibits soybean trypsin. Has antifungal activity against R.cerealis, A.brassicae and A.niger, and weak antifungal activity against F.oxysporum. In Cullen corylifolium (Malaysian scurfpea), this protein is Antifungal protein.